The primary structure comprises 216 residues: Flagellin B3 (216 aa).

The propeptide occupies 1–11; the sequence is MLLDYIKSRRG.

Belongs to the archaeal flagellin family.

The protein resides in the archaeal flagellum. Flagellin is the subunit protein which polymerizes to form the filaments of archaeal flagella. The chain is Flagellin B3 (flaB3) from Methanocaldococcus jannaschii (strain ATCC 43067 / DSM 2661 / JAL-1 / JCM 10045 / NBRC 100440) (Methanococcus jannaschii).